Reading from the N-terminus, the 566-residue chain is Glucose-6-phosphate isomerase, cytosolic (566 aa).

Glu-360 functions as the Proton donor in the catalytic mechanism. Catalysis depends on residues His-391 and Lys-516.

The protein belongs to the GPI family. Homodimer.

The protein localises to the cytoplasm. The catalysed reaction is alpha-D-glucose 6-phosphate = beta-D-fructose 6-phosphate. It participates in carbohydrate degradation; glycolysis; D-glyceraldehyde 3-phosphate and glycerone phosphate from D-glucose: step 2/4. This Spinacia oleracea (Spinach) protein is Glucose-6-phosphate isomerase, cytosolic (PGIC).